The primary structure comprises 357 residues: S-adenosylmethionine:tRNA ribosyltransferase-isomerase (357 aa).

The protein belongs to the QueA family. Monomer.

The protein localises to the cytoplasm. The enzyme catalyses 7-aminomethyl-7-carbaguanosine(34) in tRNA + S-adenosyl-L-methionine = epoxyqueuosine(34) in tRNA + adenine + L-methionine + 2 H(+). It functions in the pathway tRNA modification; tRNA-queuosine biosynthesis. Transfers and isomerizes the ribose moiety from AdoMet to the 7-aminomethyl group of 7-deazaguanine (preQ1-tRNA) to give epoxyqueuosine (oQ-tRNA). In Proteus mirabilis (strain HI4320), this protein is S-adenosylmethionine:tRNA ribosyltransferase-isomerase.